Consider the following 38-residue polypeptide: Tyrosinase inhibitor (38 aa).

Cystine bridges form between cysteine 11–cysteine 25, cysteine 18–cysteine 29, and cysteine 24–cysteine 36. Position 32 is a 3',4'-dihydroxyphenylalanine (tyrosine 32).

As to quaternary structure, monomer. In terms of processing, contains L-DOPA (3',4'-dihydroxyphenylalanine).

It is found in the secreted. In terms of biological role, potent reversible, competitive inhibitor of tyrosinase (phenol oxidase) in the nanomolar range. The protein is Tyrosinase inhibitor of Musca domestica (House fly).